The primary structure comprises 365 residues: Palmitoyltransferase ZDHHC20 (365 aa).

At 1-14 the chain is on the cytoplasmic side; the sequence is MAPCTLWRCCQRTV. The chain crosses the membrane as a helical span at residues 15 to 35; that stretch reads GWVPVLFITFVVVWSYYAYVV. The Lumenal segment spans residues 36 to 53; it reads ELCVFTLSGNGENGKAVV. The chain crosses the membrane as a helical span at residues 54-74; the sequence is YLVAFHLFFVMFVWSYWMTIF. Topologically, residues 75-169 are cytoplasmic; the sequence is TSPASPSKEF…NNCVGFSNYK (95 aa). The 51-residue stretch at 126–176 folds into the DHHC domain; that stretch reads RYCERCQLIKPDRAHHCSACDMCILKMDHHCPWVNNCVGFSNYKFFLLFLF. Residues Cys128 and Cys131 each contribute to the Zn(2+) site. Residues Lys135 and 140–143 each bind substrate; that span reads HHCS. Positions 141, 142, 145, 148, and 155 each coordinate Zn(2+). Cys156 (S-palmitoyl cysteine intermediate) is an active-site residue. Cys162 lines the Zn(2+) pocket. A helical membrane pass occupies residues 170 to 190; the sequence is FFLLFLFYSLLYCLFVATTVL. Topologically, residues 191 to 207 are lumenal; the sequence is QYFIKFWTNELTDTRAK. Residues 208–231 form a helical membrane-spanning segment; sequence FHVLFLFFVSTMFFISVLSLLSYH. Residues 232–365 are Cytoplasmic-facing; it reads CWLVGKNRTT…NNHVTVAIEN (134 aa). Residues 301-365 are disordered; the sequence is PEQASVSNQS…NNHVTVAIEN (65 aa). The span at 302–321 shows a compositional bias: polar residues; it reads EQASVSNQSESARSIGSNQP. 2 positions are modified to phosphoserine: Ser305 and Ser330.

The protein belongs to the DHHC palmitoyltransferase family. Post-translationally, autopalmitoylated (in vitro).

The protein resides in the golgi apparatus membrane. The protein localises to the cell membrane. It is found in the cytoplasm. Its subcellular location is the perinuclear region. It localises to the endoplasmic reticulum membrane. The protein resides in the endoplasmic reticulum-Golgi intermediate compartment membrane. It carries out the reaction L-cysteinyl-[protein] + hexadecanoyl-CoA = S-hexadecanoyl-L-cysteinyl-[protein] + CoA. It catalyses the reaction L-cysteinyl-[protein] + tetradecanoyl-CoA = S-tetradecanoyl-L-cysteinyl-[protein] + CoA. The catalysed reaction is L-cysteinyl-[protein] + octadecanoyl-CoA = S-octadecanoyl-L-cysteinyl-[protein] + CoA. Functionally, palmitoyltransferase that could catalyze the addition of palmitate onto various protein substrates. Catalyzes palmitoylation of Cys residues in the cytoplasmic C-terminus of EGFR, and modulates the duration of EGFR signaling by modulating palmitoylation-dependent EGFR internalization and degradation. Has a preference for acyl-CoA with C16 fatty acid chains. Can also utilize acyl-CoA with C14 and C18 fatty acid chains. May palmitoylate CALHM1 subunit of gustatory voltage-gated ion channels and modulate channel gating and kinetics. This chain is Palmitoyltransferase ZDHHC20, found in Bos taurus (Bovine).